The primary structure comprises 1047 residues: Atrial natriuretic peptide receptor 2 (1047 aa).

The signal sequence occupies residues 1–16 (MALPSLLLVVAALAGG). Topologically, residues 17–458 (VRPPGARNLT…DKTPLSTLAI (442 aa)) are extracellular. Asn-24 and Asn-35 each carry an N-linked (GlcNAc...) asparagine glycan. Cysteines 75 and 101 form a disulfide. N-linked (GlcNAc...) asparagine glycans are attached at residues Asn-161, Asn-195, Asn-244, Asn-277, and Asn-349. The chain crosses the membrane as a helical span at residues 459-478 (VALGTGVTFIMFGVSSFLIF). At 479–1047 (RKLMLEKELA…GEQKGPPGLL (569 aa)) the chain is on the cytoplasmic side. Ser-513 carries the post-translational modification Phosphoserine. The region spanning 513–786 (SRLTLSLRGS…PDFGQIKGFI (274 aa)) is the Protein kinase domain. Thr-516 carries the phosphothreonine modification. Ser-518, Ser-522, Ser-523, and Ser-526 each carry phosphoserine. Residue Thr-529 is modified to Phosphothreonine. The Guanylate cyclase domain maps to 861-991 (TIYFSDIVGF…DTVNTASRME (131 aa)).

The protein belongs to the adenylyl cyclase class-4/guanylyl cyclase family. In terms of processing, phosphorylated. Phosphorylation of the protein kinase-like domain is required for full activation by CNP. Post-translationally, glycosylated. As to expression, widely expressed. Expressed in the columnar proliferating and prehypertrophic chondrocyte layers of the tibia.

It is found in the cell membrane. The catalysed reaction is GTP = 3',5'-cyclic GMP + diphosphate. In terms of biological role, receptor for the C-type natriuretic peptide NPPC/CNP hormone. Has guanylate cyclase activity upon binding of its ligand. May play a role in the regulation of skeletal growth. The protein is Atrial natriuretic peptide receptor 2 (Npr2) of Mus musculus (Mouse).